A 439-amino-acid chain; its full sequence is Ribosomal protein uS12 methylthiotransferase RimO (439 aa).

The region spanning 7 to 122 (QTIAVIALGC…LPDLVFGKNF (116 aa)) is the MTTase N-terminal domain. [4Fe-4S] cluster contacts are provided by C16, C52, C85, C155, C159, and C162. The region spanning 141–369 (SSTIPSAYLK…NAQYNIFQAK (229 aa)) is the Radical SAM core domain.

It belongs to the methylthiotransferase family. RimO subfamily. [4Fe-4S] cluster serves as cofactor.

The protein localises to the cytoplasm. It catalyses the reaction L-aspartate(89)-[ribosomal protein uS12]-hydrogen + (sulfur carrier)-SH + AH2 + 2 S-adenosyl-L-methionine = 3-methylsulfanyl-L-aspartate(89)-[ribosomal protein uS12]-hydrogen + (sulfur carrier)-H + 5'-deoxyadenosine + L-methionine + A + S-adenosyl-L-homocysteine + 2 H(+). Its function is as follows. Catalyzes the methylthiolation of an aspartic acid residue of ribosomal protein uS12. This is Ribosomal protein uS12 methylthiotransferase RimO from Endomicrobium trichonymphae.